Here is a 378-residue protein sequence, read N- to C-terminus: Queuine tRNA-ribosyltransferase (378 aa).

Asp-93 serves as the catalytic Proton acceptor. Residues 93–97 (DSGGF), Asp-147, Gln-189, and Gly-216 contribute to the substrate site. The segment at 247–253 (GVGTFRE) is RNA binding. Asp-266 functions as the Nucleophile in the catalytic mechanism. An RNA binding; important for wobble base 34 recognition region spans residues 271–275 (TRVAR). Residues Cys-308, Cys-310, Cys-313, and His-339 each contribute to the Zn(2+) site.

The protein belongs to the queuine tRNA-ribosyltransferase family. In terms of assembly, homodimer. Within each dimer, one monomer is responsible for RNA recognition and catalysis, while the other monomer binds to the replacement base PreQ1. Requires Zn(2+) as cofactor.

The catalysed reaction is 7-aminomethyl-7-carbaguanine + guanosine(34) in tRNA = 7-aminomethyl-7-carbaguanosine(34) in tRNA + guanine. Its pathway is tRNA modification; tRNA-queuosine biosynthesis. In terms of biological role, catalyzes the base-exchange of a guanine (G) residue with the queuine precursor 7-aminomethyl-7-deazaguanine (PreQ1) at position 34 (anticodon wobble position) in tRNAs with GU(N) anticodons (tRNA-Asp, -Asn, -His and -Tyr). Catalysis occurs through a double-displacement mechanism. The nucleophile active site attacks the C1' of nucleotide 34 to detach the guanine base from the RNA, forming a covalent enzyme-RNA intermediate. The proton acceptor active site deprotonates the incoming PreQ1, allowing a nucleophilic attack on the C1' of the ribose to form the product. After dissociation, two additional enzymatic reactions on the tRNA convert PreQ1 to queuine (Q), resulting in the hypermodified nucleoside queuosine (7-(((4,5-cis-dihydroxy-2-cyclopenten-1-yl)amino)methyl)-7-deazaguanosine). The protein is Queuine tRNA-ribosyltransferase of Gloeobacter violaceus (strain ATCC 29082 / PCC 7421).